We begin with the raw amino-acid sequence, 89 residues long: Small ribosomal subunit protein uS15 (89 aa).

Belongs to the universal ribosomal protein uS15 family. As to quaternary structure, part of the 30S ribosomal subunit. Forms a bridge to the 50S subunit in the 70S ribosome, contacting the 23S rRNA.

Functionally, one of the primary rRNA binding proteins, it binds directly to 16S rRNA where it helps nucleate assembly of the platform of the 30S subunit by binding and bridging several RNA helices of the 16S rRNA. Forms an intersubunit bridge (bridge B4) with the 23S rRNA of the 50S subunit in the ribosome. The chain is Small ribosomal subunit protein uS15 from Porphyromonas gingivalis (strain ATCC 33277 / DSM 20709 / CIP 103683 / JCM 12257 / NCTC 11834 / 2561).